We begin with the raw amino-acid sequence, 455 residues long: tRNA modification GTPase MnmE (455 aa).

(6S)-5-formyl-5,6,7,8-tetrahydrofolate-binding residues include Arg24, Glu86, and Arg125. Residues 220-376 (GLTVAIIGRP…LETAILETVQ (157 aa)) form the TrmE-type G domain. Residue Asn230 participates in K(+) binding. Residues 230–235 (NVGKSS), 249–255 (TDLPGTT), and 274–277 (DTAG) each bind GTP. Residue Ser234 coordinates Mg(2+). 3 residues coordinate K(+): Thr249, Leu251, and Thr254. A Mg(2+)-binding site is contributed by Thr255. Residue Lys455 participates in (6S)-5-formyl-5,6,7,8-tetrahydrofolate binding.

This sequence belongs to the TRAFAC class TrmE-Era-EngA-EngB-Septin-like GTPase superfamily. TrmE GTPase family. Homodimer. Heterotetramer of two MnmE and two MnmG subunits. K(+) serves as cofactor.

It localises to the cytoplasm. Exhibits a very high intrinsic GTPase hydrolysis rate. Involved in the addition of a carboxymethylaminomethyl (cmnm) group at the wobble position (U34) of certain tRNAs, forming tRNA-cmnm(5)s(2)U34. The sequence is that of tRNA modification GTPase MnmE from Acaryochloris marina (strain MBIC 11017).